A 398-amino-acid polypeptide reads, in one-letter code: Phosphoglycerate kinase (398 aa).

Substrate-binding positions include 21 to 23, R36, 59 to 62, R119, and R157; these read DFN and HLGR. ATP-binding positions include K208, G296, E327, and 354-357; that span reads GGDS.

The protein belongs to the phosphoglycerate kinase family. In terms of assembly, monomer.

It localises to the cytoplasm. The catalysed reaction is (2R)-3-phosphoglycerate + ATP = (2R)-3-phospho-glyceroyl phosphate + ADP. Its pathway is carbohydrate degradation; glycolysis; pyruvate from D-glyceraldehyde 3-phosphate: step 2/5. The sequence is that of Phosphoglycerate kinase from Streptococcus pyogenes serotype M3 (strain ATCC BAA-595 / MGAS315).